A 113-amino-acid polypeptide reads, in one-letter code: UPF0482 protein YnfB (113 aa).

An N-terminal signal peptide occupies residues 1–28 (MKITLSKRIGLLAILLPCALALSTTVHA).

Belongs to the UPF0482 family.

The sequence is that of UPF0482 protein YnfB from Escherichia coli O8 (strain IAI1).